We begin with the raw amino-acid sequence, 100 residues long: Movement protein TGBp3 (100 aa).

Topologically, residues 1–41 (MQTAPREYSTSGPTAVLAPTTNTQHYAPYSLYRFLSSHKLD) are lumenal. A helical transmembrane segment spans residues 42 to 59 (LLLGIALLVFLYVITAAP). The Cytoplasmic portion of the chain corresponds to 60-100 (KEVCQVVITGESVVIRNCQQPDRILANLNLSPWNGVKFPLL).

Belongs to the Tymovirales TGBp3 protein family.

It localises to the host endoplasmic reticulum membrane. Plays a role in viral cell-to-cell propagation, by facilitating genome transport to neighboring plant cells through plasmosdesmata. May induce the formation of granular vesicles derived from the Endoplasmic reticulum, which align on actin filaments. The protein is Movement protein TGBp3 of Narcissus mosaic virus (NMV).